Consider the following 362-residue polypeptide: 3-isopropylmalate dehydrogenase (362 aa).

Substrate contacts are provided by arginine 97, arginine 107, arginine 135, and aspartate 225. Positions 225, 249, and 253 each coordinate Mg(2+). 283–295 lines the NAD(+) pocket; it reads GSAPDIAHKNLAN.

The protein belongs to the isocitrate and isopropylmalate dehydrogenases family. LeuB type 1 subfamily. Homodimer. Requires Mg(2+) as cofactor. Mn(2+) is required as a cofactor.

The protein localises to the cytoplasm. The catalysed reaction is (2R,3S)-3-isopropylmalate + NAD(+) = 4-methyl-2-oxopentanoate + CO2 + NADH. It participates in amino-acid biosynthesis; L-leucine biosynthesis; L-leucine from 3-methyl-2-oxobutanoate: step 3/4. Catalyzes the oxidation of 3-carboxy-2-hydroxy-4-methylpentanoate (3-isopropylmalate) to 3-carboxy-4-methyl-2-oxopentanoate. The product decarboxylates to 4-methyl-2 oxopentanoate. The protein is 3-isopropylmalate dehydrogenase of Prochlorococcus marinus (strain SARG / CCMP1375 / SS120).